We begin with the raw amino-acid sequence, 141 residues long: Large ribosomal subunit protein uL11 (141 aa).

This sequence belongs to the universal ribosomal protein uL11 family. In terms of assembly, part of the ribosomal stalk of the 50S ribosomal subunit. Interacts with L10 and the large rRNA to form the base of the stalk. L10 forms an elongated spine to which L12 dimers bind in a sequential fashion forming a multimeric L10(L12)X complex. In terms of processing, one or more lysine residues are methylated.

Its function is as follows. Forms part of the ribosomal stalk which helps the ribosome interact with GTP-bound translation factors. This chain is Large ribosomal subunit protein uL11, found in Wolinella succinogenes (strain ATCC 29543 / DSM 1740 / CCUG 13145 / JCM 31913 / LMG 7466 / NCTC 11488 / FDC 602W) (Vibrio succinogenes).